Reading from the N-terminus, the 225-residue chain is Plasma membrane-associated cation-binding protein 1 (225 aa).

Gly2 is lipidated: N-myristoyl glycine. Thr32 carries the post-translational modification Phosphothreonine. Ser107 is subject to Phosphoserine. Over residues 140–197 (PVEEVKAEEPAKTEEPAKTEGTSGEKEEIVEETKKGETPETAVVEEKKPEVEEKKEEA) the composition is skewed to basic and acidic residues. The segment at 140 to 225 (PVEEVKAEEP…TAPVAEPPKP (86 aa)) is disordered. Phosphothreonine occurs at positions 152 and 177.

It belongs to the DREPP family. As to quaternary structure, interacts with Turnip mosaic virus (TuMV) P3N-PIPO. Cu(2+) serves as cofactor. As to expression, mostly expressed in the basal region of hypocotyls. Expressed in seedlings, roots, shoots, stems, leaves (e.g. in epidermis and vascular tissues), flowers (e.g. in pistils and anthers) and siliques (at protein level).

It localises to the cell membrane. Its subcellular location is the cytoplasm. The protein localises to the cytoskeleton. It is found in the cell junction. The protein resides in the plasmodesma. Functionally, may be involved in intracellular signaling through interaction with PtdInsPs and calmodulin (CaM); may keep PtdInsPs attached to the plasma membrane until Ca(2+)-CaM reaches a competitive concentration subsequent to an increase triggered by a stimulus, thus leading to PtdInsPs release and subsequent activation of InsPs-dependent signaling cascade. Interacts competitively at the N-terminus with calcium ions and CaM (in a calcium-dependent manner), and with the phosphatidylinositol phosphates PtdIns(3,4,5)P(3), PtdIns(3,4)P(2), PtdIns(4,5)P(2) and PtdIns(3,5)P(2). Also binds weakly to PtdIns(3)P, PtdIns(4)P and PtdIns(5)P. Negative regulator of hypocotyl cell elongation by destabilizing cortical microtubules in a calcium-dependent manner. Binds directly to and destabilized microtubules to enhance microtubule depolymerization when cytoplasmic calcium increases. In case of Turnip mosaic virus (TuMV) infection, confers sensitivity by promoting viral cell-to-cell movement through interaction with viral P3N-PIPO. The polypeptide is Plasma membrane-associated cation-binding protein 1 (PCAP1) (Arabidopsis thaliana (Mouse-ear cress)).